We begin with the raw amino-acid sequence, 417 residues long: Senescence-associated protein AAF, chloroplastic (417 aa).

The transit peptide at 1–36 directs the protein to the chloroplast; sequence MALNVSKVVPNSPILVKSVNASRSRRVLLAYVHHPL.

This sequence belongs to the ATA15/OSA15 family. As to expression, expressed in leaves. Expressed in 7-day-old seedlings, roots, rosette leaves, cauline leaves and flower buds.

It is found in the plastid. The protein resides in the chloroplast. Its function is as follows. Involved in modulation of redox homeostasis to regulate leaf senescence mediated by age and stress factors during plant development. Its function is dependent of EIN2, a central factor of ethylene signaling. This Arabidopsis thaliana (Mouse-ear cress) protein is Senescence-associated protein AAF, chloroplastic.